Reading from the N-terminus, the 185-residue chain is NADH-quinone oxidoreductase subunit B (185 aa).

Positions 38, 39, 104, and 133 each coordinate [4Fe-4S] cluster. The span at 165–176 (AAEAYREEERQA) shows a compositional bias: basic and acidic residues. The segment at 165–185 (AAEAYREEERQAARSALGPRS) is disordered.

This sequence belongs to the complex I 20 kDa subunit family. In terms of assembly, NDH-1 is composed of 14 different subunits. Subunits NuoB, C, D, E, F, and G constitute the peripheral sector of the complex. The cofactor is [4Fe-4S] cluster.

Its subcellular location is the cell membrane. The catalysed reaction is a quinone + NADH + 5 H(+)(in) = a quinol + NAD(+) + 4 H(+)(out). NDH-1 shuttles electrons from NADH, via FMN and iron-sulfur (Fe-S) centers, to quinones in the respiratory chain. The immediate electron acceptor for the enzyme in this species is believed to be ubiquinone. Couples the redox reaction to proton translocation (for every two electrons transferred, four hydrogen ions are translocated across the cytoplasmic membrane), and thus conserves the redox energy in a proton gradient. This chain is NADH-quinone oxidoreductase subunit B, found in Thermomicrobium roseum (strain ATCC 27502 / DSM 5159 / P-2).